The primary structure comprises 212 residues: Uracil phosphoribosyltransferase (212 aa).

Residues Arg78, Arg103, and 130-138 (DPMLATGGS) contribute to the 5-phospho-alpha-D-ribose 1-diphosphate site. Residues Ile193 and 198–200 (GDA) contribute to the uracil site. A 5-phospho-alpha-D-ribose 1-diphosphate-binding site is contributed by Asp199.

Belongs to the UPRTase family. Mg(2+) serves as cofactor.

It catalyses the reaction UMP + diphosphate = 5-phospho-alpha-D-ribose 1-diphosphate + uracil. The protein operates within pyrimidine metabolism; UMP biosynthesis via salvage pathway; UMP from uracil: step 1/1. With respect to regulation, allosterically activated by GTP. Functionally, catalyzes the conversion of uracil and 5-phospho-alpha-D-ribose 1-diphosphate (PRPP) to UMP and diphosphate. This chain is Uracil phosphoribosyltransferase, found in Pseudomonas aeruginosa (strain LESB58).